Reading from the N-terminus, the 468-residue chain is Ribulose bisphosphate carboxylase large chain (468 aa).

The residue at position 5 (Lys-5) is an N6,N6,N6-trimethyllysine. Substrate is bound by residues Asn-114 and Thr-164. The active-site Proton acceptor is Lys-166. Substrate is bound at residue Lys-168. The Mg(2+) site is built by Lys-192, Asp-194, and Glu-195. Lys-192 carries the N6-carboxylysine modification. Catalysis depends on His-285, which acts as the Proton acceptor. Positions 286, 318, and 370 each coordinate substrate.

This sequence belongs to the RuBisCO large chain family. Type I subfamily. Heterohexadecamer of 8 large chains and 8 small chains; disulfide-linked. The disulfide link is formed within the large subunit homodimers. Requires Mg(2+) as cofactor. Post-translationally, the disulfide bond which can form in the large chain dimeric partners within the hexadecamer appears to be associated with oxidative stress and protein turnover.

The protein resides in the plastid. It localises to the chloroplast. The enzyme catalyses 2 (2R)-3-phosphoglycerate + 2 H(+) = D-ribulose 1,5-bisphosphate + CO2 + H2O. The catalysed reaction is D-ribulose 1,5-bisphosphate + O2 = 2-phosphoglycolate + (2R)-3-phosphoglycerate + 2 H(+). RuBisCO catalyzes two reactions: the carboxylation of D-ribulose 1,5-bisphosphate, the primary event in carbon dioxide fixation, as well as the oxidative fragmentation of the pentose substrate in the photorespiration process. Both reactions occur simultaneously and in competition at the same active site. The sequence is that of Ribulose bisphosphate carboxylase large chain from Anthospermum herbaceum.